Consider the following 186-residue polypeptide: MRRAEIERETKETYVKIALNLDGEGSFLGDFPIPYYKHLISTLCFYAGWDVEINAKGDIEVDPHHLIEDTGITLGKAFNSAILKSSFLRFSNKVIPMDEALVMVVVDISGRPYLEIKDDKEILKGRLIKEFLRGFVNNSQMTLHIWILSGENLHHVEEAIFKALGLALGEASKEVSNLKSTKGKIW.

This sequence belongs to the imidazoleglycerol-phosphate dehydratase family.

It is found in the cytoplasm. The enzyme catalyses D-erythro-1-(imidazol-4-yl)glycerol 3-phosphate = 3-(imidazol-4-yl)-2-oxopropyl phosphate + H2O. The protein operates within amino-acid biosynthesis; L-histidine biosynthesis; L-histidine from 5-phospho-alpha-D-ribose 1-diphosphate: step 6/9. The sequence is that of Imidazoleglycerol-phosphate dehydratase from Dictyoglomus thermophilum (strain ATCC 35947 / DSM 3960 / H-6-12).